The following is a 506-amino-acid chain: Mitogen-activated protein kinase 13 (506 aa).

The 292-residue stretch at 13–304 (YQIQEVVGKG…AEEALADPYF (292 aa)) folds into the Protein kinase domain. ATP contacts are provided by residues 19 to 27 (VGKGSYGVV) and lysine 42. Residue aspartate 139 is the Proton acceptor of the active site. At threonine 175 the chain carries Phosphothreonine. Residues 175–177 (TDY) carry the TXY motif. The residue at position 177 (tyrosine 177) is a Phosphotyrosine. Residues 384–421 (YSRGERSTPLRRQHASLPRERVCSSVDSNNQDSDNEER) form a disordered region.

The protein belongs to the protein kinase superfamily. CMGC Ser/Thr protein kinase family. MAP kinase subfamily. Post-translationally, dually phosphorylated on Thr-175 and Tyr-177, which activates the enzyme.

It carries out the reaction L-seryl-[protein] + ATP = O-phospho-L-seryl-[protein] + ADP + H(+). The enzyme catalyses L-threonyl-[protein] + ATP = O-phospho-L-threonyl-[protein] + ADP + H(+). With respect to regulation, activated by threonine and tyrosine phosphorylation. This is Mitogen-activated protein kinase 13 (MPK13) from Oryza sativa subsp. indica (Rice).